Reading from the N-terminus, the 504-residue chain is Histidine--tRNA ligase (504 aa).

Belongs to the class-II aminoacyl-tRNA synthetase family. Homodimer.

Its subcellular location is the cytoplasm. The enzyme catalyses tRNA(His) + L-histidine + ATP = L-histidyl-tRNA(His) + AMP + diphosphate + H(+). In Rhizobium meliloti (strain 1021) (Ensifer meliloti), this protein is Histidine--tRNA ligase (hisS).